Reading from the N-terminus, the 447-residue chain is Trigger factor (447 aa).

A PPIase FKBP-type domain is found at 164–249 (GNQVTFDFEG…VKLVEKSKLP (86 aa)).

The protein belongs to the FKBP-type PPIase family. Tig subfamily.

It localises to the cytoplasm. It carries out the reaction [protein]-peptidylproline (omega=180) = [protein]-peptidylproline (omega=0). In terms of biological role, involved in protein export. Acts as a chaperone by maintaining the newly synthesized protein in an open conformation. Functions as a peptidyl-prolyl cis-trans isomerase. This chain is Trigger factor, found in Psychrobacter cryohalolentis (strain ATCC BAA-1226 / DSM 17306 / VKM B-2378 / K5).